A 236-amino-acid chain; its full sequence is Phosphatidylserine decarboxylase proenzyme (236 aa).

Ser-194 functions as the Schiff-base intermediate with substrate; via pyruvic acid in the catalytic mechanism. Ser-194 carries the pyruvic acid (Ser); by autocatalysis modification.

Belongs to the phosphatidylserine decarboxylase family. PSD-A subfamily. In terms of assembly, heterodimer of a large membrane-associated beta subunit and a small pyruvoyl-containing alpha subunit. Requires pyruvate as cofactor. Post-translationally, is synthesized initially as an inactive proenzyme. Formation of the active enzyme involves a self-maturation process in which the active site pyruvoyl group is generated from an internal serine residue via an autocatalytic post-translational modification. Two non-identical subunits are generated from the proenzyme in this reaction, and the pyruvate is formed at the N-terminus of the alpha chain, which is derived from the carboxyl end of the proenzyme. The post-translation cleavage follows an unusual pathway, termed non-hydrolytic serinolysis, in which the side chain hydroxyl group of the serine supplies its oxygen atom to form the C-terminus of the beta chain, while the remainder of the serine residue undergoes an oxidative deamination to produce ammonia and the pyruvoyl prosthetic group on the alpha chain.

Its subcellular location is the cell membrane. It catalyses the reaction a 1,2-diacyl-sn-glycero-3-phospho-L-serine + H(+) = a 1,2-diacyl-sn-glycero-3-phosphoethanolamine + CO2. Its pathway is phospholipid metabolism; phosphatidylethanolamine biosynthesis; phosphatidylethanolamine from CDP-diacylglycerol: step 2/2. In terms of biological role, catalyzes the formation of phosphatidylethanolamine (PtdEtn) from phosphatidylserine (PtdSer). This is Phosphatidylserine decarboxylase proenzyme from Rhodospirillum rubrum (strain ATCC 11170 / ATH 1.1.1 / DSM 467 / LMG 4362 / NCIMB 8255 / S1).